Consider the following 382-residue polypeptide: MTEQRPLTIALVAGETSGDILGAGLIRALKERVPNARFVGVAGPRMQAEGCEAWYEMEELAVMGIVEVLGRLRRLLHIRADLTTRFGELKPDVFVGIDAPDFNITLEGNLKKQGIKTIHYVSPSVWAWRQKRVFKIGRATDLVLAFLPFEKAFYDKYNVPCRFIGHTMADAMPLDPDKNGARDVLGIPHDAHCLALLPGSRGAEVEMLSADFLKTAQLLRQTYPDLEIVVPLVNAKRREQFERIKAEVAPDLSVHMLDGLGREAMVASDAALLASGTAALECMLAKCPMVVGYRMKPFTFWLAKRLVKTDYVSLPNLLAGRELVKELLQEECEPQKLAAALLPLLANGKTSHAMHDTFRELHQQIRCNADEQAAQAVLELAQ.

It belongs to the LpxB family.

The enzyme catalyses 2-N,3-O-bis[(3R)-3-hydroxytetradecanoyl]-alpha-D-glucosaminyl 1-phosphate + UDP-2-N,3-O-bis[(3R)-3-hydroxytetradecanoyl]-alpha-D-glucosamine = lipid A disaccharide (E. coli) + UDP + H(+). It carries out the reaction a lipid X + a UDP-2-N,3-O-bis[(3R)-3-hydroxyacyl]-alpha-D-glucosamine = a lipid A disaccharide + UDP + H(+). It participates in glycolipid biosynthesis; lipid IV(A) biosynthesis; lipid IV(A) from (3R)-3-hydroxytetradecanoyl-[acyl-carrier-protein] and UDP-N-acetyl-alpha-D-glucosamine: step 5/6. Its function is as follows. Condensation of UDP-2,3-diacylglucosamine and 2,3-diacylglucosamine-1-phosphate to form lipid A disaccharide, a precursor of lipid A, a phosphorylated glycolipid that anchors the lipopolysaccharide to the outer membrane of the cell. This Escherichia coli O17:K52:H18 (strain UMN026 / ExPEC) protein is Lipid-A-disaccharide synthase.